A 79-amino-acid chain; its full sequence is Small cysteine-rich protein 2 (79 aa).

The first 21 residues, 1–21 (MRSQHVLILLLGLVCASQVLG), serve as a signal peptide directing secretion. The propeptide occupies 22-35 (KHLTKVKAKALHYD).

Belongs to the Cnidaria small cysteine-rich protein (SCRiP) family. delta subfamily. Post-translationally, contains 4 disulfide bonds.

Its subcellular location is the secreted. The protein resides in the nematocyst. In terms of biological role, this recombinant protein induces severe neurotoxicity on zebrafish larvae (Danio rerio) at a concentration of 230 mg/ml, but does not show toxicity when injected in blowfly larvae (Sarcophaga falculata). All fish incubated with this protein died within 200 minutes of exposure. Has also been claimed to be implied in calcification, but this function seems improbable. The chain is Small cysteine-rich protein 2 from Acropora millepora (Staghorn coral).